The sequence spans 337 residues: Quercetin 2,3-dioxygenase (337 aa).

Cupin type-2 domains lie at 55 to 110 (KGDA…MQSH) and 226 to 281 (PKGD…RLDS). 8 residues coordinate Fe cation: His62, His64, Glu69, His103, His234, His236, Glu241, and His275.

Homodimer. It depends on Fe(2+) as a cofactor.

The enzyme catalyses quercetin + O2 = 2-(3,4-dihydroxybenzoyloxy)-4,6-dihydroxybenzoate + CO. It functions in the pathway flavonoid metabolism; quercetin degradation. Functionally, performs the first step in the degradation of the flavonoid quercetin by a dioxygenase reaction. The enzyme catalyzes the cleavage of the O-heteroaromatic ring of the flavonol quercetin yielding the depside 2-protocatechuoyl-phloroglucinol carboxylic acid and carbon monoxide. This involves the remarkable dioxygenolytic cleavage of two carbon-carbon bonds. The protein is Quercetin 2,3-dioxygenase (qdoI) of Bacillus subtilis (strain 168).